Reading from the N-terminus, the 507-residue chain is ATP synthase subunit alpha, chloroplastic (507 aa).

170–177 is an ATP binding site; it reads GDRQTGKT.

This sequence belongs to the ATPase alpha/beta chains family. F-type ATPases have 2 components, CF(1) - the catalytic core - and CF(0) - the membrane proton channel. CF(1) has five subunits: alpha(3), beta(3), gamma(1), delta(1), epsilon(1). CF(0) has four main subunits: a, b, b' and c.

Its subcellular location is the plastid. The protein resides in the chloroplast thylakoid membrane. The enzyme catalyses ATP + H2O + 4 H(+)(in) = ADP + phosphate + 5 H(+)(out). Its function is as follows. Produces ATP from ADP in the presence of a proton gradient across the membrane. The alpha chain is a regulatory subunit. This Huperzia lucidula (Shining clubmoss) protein is ATP synthase subunit alpha, chloroplastic.